A 368-amino-acid chain; its full sequence is Phospho-N-acetylmuramoyl-pentapeptide-transferase (368 aa).

10 helical membrane passes run 32–52 (TGGAMVTGALFVFLFGPWIID), 79–99 (TPTMGGLMILSGLVVSTVLWA), 102–122 (LNPYVWIVLAVTLGFGFIGFY), 140–160 (TRLLLELLIALAACYALIRLG), 176–196 (VVVDLGWFFLAFGAFIIVGAG), 207–227 (GLAIVPVMIAAASFGMIAYLA), 247–267 (LAVLCGAVLGAGLGFLWFNAP), 271–291 (IFMGDTGSLALGGMLGSIAVA), 296–316 (IVLAVIGGLFVLEAVSVIVQV), and 345–365 (QIVIRFWIISVMLALAGLSTL).

Belongs to the glycosyltransferase 4 family. MraY subfamily. Mg(2+) serves as cofactor.

The protein resides in the cell inner membrane. It catalyses the reaction UDP-N-acetyl-alpha-D-muramoyl-L-alanyl-gamma-D-glutamyl-meso-2,6-diaminopimeloyl-D-alanyl-D-alanine + di-trans,octa-cis-undecaprenyl phosphate = di-trans,octa-cis-undecaprenyl diphospho-N-acetyl-alpha-D-muramoyl-L-alanyl-D-glutamyl-meso-2,6-diaminopimeloyl-D-alanyl-D-alanine + UMP. It functions in the pathway cell wall biogenesis; peptidoglycan biosynthesis. In terms of biological role, catalyzes the initial step of the lipid cycle reactions in the biosynthesis of the cell wall peptidoglycan: transfers peptidoglycan precursor phospho-MurNAc-pentapeptide from UDP-MurNAc-pentapeptide onto the lipid carrier undecaprenyl phosphate, yielding undecaprenyl-pyrophosphoryl-MurNAc-pentapeptide, known as lipid I. In Nitrobacter hamburgensis (strain DSM 10229 / NCIMB 13809 / X14), this protein is Phospho-N-acetylmuramoyl-pentapeptide-transferase.